We begin with the raw amino-acid sequence, 111 residues long: Entry-fusion complex protein OPG086 (111 aa).

A helical; Signal-anchor transmembrane segment spans residues 1-21 (MASLLYFILFLLFVCISYYFT). The Virion surface portion of the chain corresponds to 22–111 (YYPTNKLQAA…TLLPILLLSK (90 aa)).

The protein belongs to the orthopoxvirus OPG086 family. In terms of assembly, interacts with OPG099/L5. Component of the entry fusion complex (EFC) composed of OPG053, OPG076, OPG086, OPG094, OPG095, OPG099, OPG107, OPG143, OPG104, OPG147 and OPG155. Except for OPG095 and OPG053, each of the EFC proteins is required for assembly or stability of the complex. In terms of processing, unglycosylated because produced in viral factories instead of the classic ER -Golgi route.

Its subcellular location is the virion membrane. In terms of biological role, component of the entry fusion complex (EFC), which consists of 11 proteins. During cell infection, this complex mediates entry of the virion core into the host cytoplasm by a two-step mechanism consisting of lipid mixing of the viral and cellular membranes and subsequent pore formation. The polypeptide is Entry-fusion complex protein OPG086 (OPG086) (Variola virus (isolate Human/India/Ind3/1967) (VARV)).